Here is a 155-residue protein sequence, read N- to C-terminus: Small ribosomal subunit protein uS8m (155 aa).

It belongs to the universal ribosomal protein uS8 family. Component of the mitochondrial small ribosomal subunit (mt-SSU). Mature yeast 74S mitochondrial ribosomes consist of a small (37S) and a large (54S) subunit. The 37S small subunit contains a 15S ribosomal RNA (15S mt-rRNA) and 34 different proteins. The 54S large subunit contains a 21S rRNA (21S mt-rRNA) and 46 different proteins.

The protein localises to the mitochondrion. Its function is as follows. Component of the mitochondrial ribosome (mitoribosome), a dedicated translation machinery responsible for the synthesis of mitochondrial genome-encoded proteins, including at least some of the essential transmembrane subunits of the mitochondrial respiratory chain. The mitoribosomes are attached to the mitochondrial inner membrane and translation products are cotranslationally integrated into the membrane. The sequence is that of Small ribosomal subunit protein uS8m (MRPS8) from Saccharomyces cerevisiae (strain ATCC 204508 / S288c) (Baker's yeast).